Reading from the N-terminus, the 159-residue chain is Ribosomal RNA large subunit methyltransferase H (159 aa).

S-adenosyl-L-methionine is bound by residues Ile76, Gly108, and 127 to 132 (FSKMTF).

The protein belongs to the RNA methyltransferase RlmH family. As to quaternary structure, homodimer.

The protein localises to the cytoplasm. It catalyses the reaction pseudouridine(1915) in 23S rRNA + S-adenosyl-L-methionine = N(3)-methylpseudouridine(1915) in 23S rRNA + S-adenosyl-L-homocysteine + H(+). Functionally, specifically methylates the pseudouridine at position 1915 (m3Psi1915) in 23S rRNA. The sequence is that of Ribosomal RNA large subunit methyltransferase H from Clostridium botulinum (strain Loch Maree / Type A3).